A 350-amino-acid chain; its full sequence is Alcohol dehydrogenase 1 (350 aa).

7 residues coordinate Zn(2+): cysteine 46, histidine 69, cysteine 100, cysteine 103, cysteine 106, cysteine 114, and cysteine 156. NAD(+) contacts are provided by residues 180–186 (GAAGGLG), aspartate 204, lysine 209, 271–273 (VGL), and arginine 343.

The protein belongs to the zinc-containing alcohol dehydrogenase family. Homotetramer. Zn(2+) is required as a cofactor.

Its subcellular location is the cytoplasm. The enzyme catalyses a primary alcohol + NAD(+) = an aldehyde + NADH + H(+). It carries out the reaction a secondary alcohol + NAD(+) = a ketone + NADH + H(+). The protein is Alcohol dehydrogenase 1 (ADH1) of Kluyveromyces lactis (strain ATCC 8585 / CBS 2359 / DSM 70799 / NBRC 1267 / NRRL Y-1140 / WM37) (Yeast).